A 217-amino-acid polypeptide reads, in one-letter code: Phosphoenolpyruvate guanylyltransferase (217 aa).

Residues Thr150, Gly165, and Ser168 each contribute to the phosphoenolpyruvate site.

Belongs to the CofC family.

The enzyme catalyses phosphoenolpyruvate + GTP + H(+) = enolpyruvoyl-2-diphospho-5'-guanosine + diphosphate. Its pathway is cofactor biosynthesis; coenzyme F420 biosynthesis. In terms of biological role, guanylyltransferase that catalyzes the activation of phosphoenolpyruvate (PEP) as enolpyruvoyl-2-diphospho-5'-guanosine, via the condensation of PEP with GTP. It is involved in the biosynthesis of coenzyme F420, a hydride carrier cofactor. The chain is Phosphoenolpyruvate guanylyltransferase from Mycobacterium marinum (strain ATCC BAA-535 / M).